Reading from the N-terminus, the 1086-residue chain is NAD(P) transhydrogenase, mitochondrial (1086 aa).

Residues Met1–Trp43 constitute a mitochondrion transit peptide. Over Cys44 to Thr474 the chain is Mitochondrial matrix. N6-acetyllysine is present on Lys70. Lys117 carries the post-translational modification N6-succinyllysine. Arg182–Thr184 is a binding site for NAD(+). Lys224 is modified (N6-succinyllysine). Residues Val237, Asp257–Arg259, and Gly287 contribute to the NAD(+) site. Lys294 bears the N6-succinyllysine mark. Glu300 and Leu319 together coordinate NAD(+). The residue at position 331 (Lys331) is an N6-succinyllysine. Lys397 carries the post-translational modification N6-acetyllysine. The next 4 membrane-spanning stretches (helical) occupy residues Thr475–Ala493, Met501–Pro521, Leu527–Met546, and Ser558–Thr578. At Gln579–Asn595 the chain is on the mitochondrial matrix side. Transmembrane regions (helical) follow at residues Tyr596–Gly616, Ile622–Gly642, Leu646–Leu666, Leu672–Ala691, and Leu702–Tyr722. Residues Ile723 to Lys739 lie on the Cytoplasmic side of the membrane. 5 consecutive transmembrane segments (helical) span residues Ile740–Tyr760, His778–Ala797, Phe801–Gly819, Val833–Leu853, and Leu857–Ala879. At Met880–Lys1086 the chain is on the mitochondrial matrix side. Residues Tyr933, Val965–Pro970, Gly1007–Thr1011, Gly1026–Met1027, Lys1042–Tyr1049, and Asp1068–Ala1069 contribute to the NADP(+) site. Lys1079 bears the N6-succinyllysine mark.

The protein in the N-terminal section; belongs to the AlaDH/PNT family. It in the C-terminal section; belongs to the PNT beta subunit family. Homodimer. In terms of tissue distribution, widely expressed with expression most readily detectable in adrenal, heart, kidney, thyroid and adipose tissues.

It is found in the mitochondrion inner membrane. The enzyme catalyses NAD(+) + NADPH + H(+)(in) = NADH + NADP(+) + H(+)(out). The transhydrogenation between NADH and NADP is coupled to respiration and ATP hydrolysis and functions as a proton pump across the membrane. May play a role in reactive oxygen species (ROS) detoxification in the adrenal gland. The polypeptide is NAD(P) transhydrogenase, mitochondrial (Nnt) (Mus musculus (Mouse)).